The chain runs to 445 residues: Damage suppressor protein (445 aa).

Composition is skewed to polar residues over residues 1 to 15 and 25 to 47; these read MAST…SSTG and SQGS…SATS. Disordered stretches follow at residues 1 to 145 and 203 to 445; these read MAST…HSVI and YHSV…RKRK. Positions 61–73 are enriched in low complexity; it reads SSTTAGSSSTQGQ. Positions 74 to 87 are enriched in polar residues; the sequence is KFSTTPTDPKTFSS. Residues 88–97 are compositionally biased toward basic and acidic residues; it reads DQKEKSKSPA. Positions 117–138 are enriched in low complexity; it reads DAKSSGQSQGQSKDSGKSSSDS. Basic and acidic residues predominate over residues 207-228; that stretch reads VGDKTDDKKEGEHSGDKKDDSK. The interval 208–445 is required and sufficient for DNA-binding and co-localization with nuclear DNA; it reads GDKTDDKKEG…GGKAGGRKRK (238 aa). Over residues 245–256 the composition is skewed to polar residues; it reads ETSGQAESSSGN. Over residues 257-306 the composition is skewed to low complexity; sequence EGAAPAKGRGRGRPPAAAKGVAKGAAKGAAASKGAKSGAESSKGGEQSSG. A compositionally biased stretch (gly residues) spans 329-338; that stretch reads GEGGASGSEG. Positions 360 to 445 are required for nucleosome binding and for the protection of chromatin from hydroxyl radical-mediated DNA damage; it reads EPPRRSSRLT…GGKAGGRKRK (86 aa). Positions 367 to 431 are enriched in low complexity; that stretch reads RLTSSGTGAG…ASKAPQNGAG (65 aa). The segment covering 432 to 445 has biased composition (basic residues); that stretch reads AKKKGGKAGGRKRK.

The protein localises to the nucleus. Unique chromatin-associating protein that contributes to the organism's exceptional tolerance to harsh environmental stresses. Binds with a higher affinity to nucleosomes than to free DNA. Protects chromatin from damage caused by hydroxyl radical-mediated cleavage induced by X-rays or treatment with hydrogen peroxide. Suppresses X-ray-induced DNA damage that includes single-strand breaks (SSBs) as well as more hazardous double-strand breaks (DSBs), and improves radiotolerance. Also shields DNA against reactive oxygen species (ROS). This Ramazzottius varieornatus (Water bear) protein is Damage suppressor protein.